Here is a 57-residue protein sequence, read N- to C-terminus: Large ribosomal subunit protein bL32 (57 aa).

The segment covering 1–19 (MATPKRRMSRANTRSRRSQ) has biased composition (basic residues). The segment at 1 to 20 (MATPKRRMSRANTRSRRSQW) is disordered.

This sequence belongs to the bacterial ribosomal protein bL32 family.

In Mycobacterium marinum (strain ATCC BAA-535 / M), this protein is Large ribosomal subunit protein bL32.